The primary structure comprises 261 residues: Putative hydro-lyase VSAL_I1435 (261 aa).

It belongs to the D-glutamate cyclase family.

The chain is Putative hydro-lyase VSAL_I1435 from Aliivibrio salmonicida (strain LFI1238) (Vibrio salmonicida (strain LFI1238)).